Reading from the N-terminus, the 273-residue chain is Flagellin FljN (273 aa).

It belongs to the bacterial flagellin family. In terms of assembly, in C.crescentus, the flagellar filament is composed of multiple flagellins of 29 kDa; 27 kDa and 25 kDa.

Its subcellular location is the secreted. It localises to the bacterial flagellum. Its function is as follows. Flagellin is the subunit protein which polymerizes to form the filaments of bacterial flagella. This Caulobacter vibrioides (strain ATCC 19089 / CIP 103742 / CB 15) (Caulobacter crescentus) protein is Flagellin FljN (fljN).